The chain runs to 752 residues: Sialidase 85-1.1 (752 aa).

The signal sequence occupies residues 1-23; sequence MSRRVFASAVLLLIVVTMCCGGA. BNR repeat units lie at residues 274–285 and 319–330; these read IYSKDNGSTWSL and YVSRDMGTTWTE. The tract at residues 693-725 is disordered; the sequence is APEPQVKIAPKPAAPAAPAGNEETARETGDGGA. Residues 701–711 show a composition bias toward low complexity; sequence APKPAAPAAPA.

It belongs to the glycosyl hydrolase 33 family.

It carries out the reaction Hydrolysis of alpha-(2-&gt;3)-, alpha-(2-&gt;6)-, alpha-(2-&gt;8)- glycosidic linkages of terminal sialic acid residues in oligosaccharides, glycoproteins, glycolipids, colominic acid and synthetic substrates.. Its function is as follows. Developmentally regulated neuraminidase implicated in parasite invasion of cells. May contribute to the pathology during T.cruzi infection by cleaving sialic acid from cells of the immune system. The protein is Sialidase 85-1.1 (SA85-1.1) of Trypanosoma cruzi.